A 192-amino-acid polypeptide reads, in one-letter code: Signal peptidase complex catalytic subunit sec11 (192 aa).

Residues 1-18 (MLSFLSSNLSSTRQSLAQ) lie on the Cytoplasmic side of the membrane. The chain crosses the membrane as a helical; Signal-anchor for type II membrane protein span at residues 19–39 (VLNFALVLSTAFMLWKGLSVF). Residues 40–192 (TASSSPIVVV…GLMVILQREQ (153 aa)) lie on the Lumenal side of the membrane. Catalysis depends on charge relay system residues S53, H92, and D133. Positions 177-188 (VLLGIMGLMVIL) are C-terminal short (CTS) helix.

The protein belongs to the peptidase S26B family. Component of the signal peptidase complex (SPC) composed of a catalytic subunit SEC11 and three accessory subunits SPC1, SPC2 and SPC3. The complex induces a local thinning of the ER membrane which is used to measure the length of the signal peptide (SP) h-region of protein substrates. This ensures the selectivity of the complex towards h-regions shorter than 18-20 amino acids. SPC associates with the translocon complex.

Its subcellular location is the endoplasmic reticulum membrane. The enzyme catalyses Cleavage of hydrophobic, N-terminal signal or leader sequences from secreted and periplasmic proteins.. Functionally, catalytic component of the signal peptidase complex (SPC) which catalyzes the cleavage of N-terminal signal sequences from nascent proteins as they are translocated into the lumen of the endoplasmic reticulum. Specifically cleaves N-terminal signal peptides that contain a hydrophobic alpha-helix (h-region) shorter than 18-20 amino acids. This Aspergillus clavatus (strain ATCC 1007 / CBS 513.65 / DSM 816 / NCTC 3887 / NRRL 1 / QM 1276 / 107) protein is Signal peptidase complex catalytic subunit sec11 (sec11).